Here is a 157-residue protein sequence, read N- to C-terminus: Ribosome maturation factor RimP (157 aa).

It belongs to the RimP family.

The protein localises to the cytoplasm. Functionally, required for maturation of 30S ribosomal subunits. This chain is Ribosome maturation factor RimP, found in Lactococcus lactis subsp. cremoris (strain MG1363).